The chain runs to 874 residues: Alanine--tRNA ligase (874 aa).

The Zn(2+) site is built by His-562, His-566, Cys-664, and His-668.

It belongs to the class-II aminoacyl-tRNA synthetase family. The cofactor is Zn(2+).

It is found in the cytoplasm. The catalysed reaction is tRNA(Ala) + L-alanine + ATP = L-alanyl-tRNA(Ala) + AMP + diphosphate. Functionally, catalyzes the attachment of alanine to tRNA(Ala) in a two-step reaction: alanine is first activated by ATP to form Ala-AMP and then transferred to the acceptor end of tRNA(Ala). Also edits incorrectly charged Ser-tRNA(Ala) and Gly-tRNA(Ala) via its editing domain. The protein is Alanine--tRNA ligase of Shewanella sediminis (strain HAW-EB3).